A 955-amino-acid chain; its full sequence is Coiled-coil domain-containing protein 146 (955 aa).

Acidic residues predominate over residues 1–17; that stretch reads MEDSSTDTEKEEEEEKD. Residues 1–22 are disordered; sequence MEDSSTDTEKEEEEEKDEKDQE. 5 coiled-coil regions span residues 114-141, 169-321, 400-461, 534-640, and 667-832; these read EAFSTEVSKMREQLLKYQNEYNAVKERE, GEME…AREN, STLS…LLRM, KAHQ…RNES, and NGEI…MKQA.

As to quaternary structure, interacts with CCDC38 and CCDC42. Interacts with intraflagellar transport proteins IFT20 and IFT88. (Microbial infection) Interacts with Chlamydia trachomatis incM/YT288. In host cells infected with C.trachomatis incM, CCDC146 is recruited to the periphery of the pathogen-containing vacuole but recruitment is not dependent on incM. In terms of tissue distribution, widely expressed.

Its subcellular location is the cytoplasm. The protein localises to the cytoskeleton. The protein resides in the microtubule organizing center. It is found in the centrosome. It localises to the centriole. Its subcellular location is the flagellum axoneme. The protein localises to the cilium basal body. The protein resides in the midbody. In terms of biological role, essential for sperm flagellum biogenesis and male fertility. The sequence is that of Coiled-coil domain-containing protein 146 (CCDC146) from Homo sapiens (Human).